Consider the following 124-residue polypeptide: Fluoride-specific ion channel FluC (124 aa).

4 consecutive transmembrane segments (helical) span residues 3-23 (YLLVFLGGGLGAMFRHFINTV), 36-56 (TFFINVSGSLVMGLIAGYFAF), 66-86 (LFLMTGILGGYTTFSAFSLDA), and 100-120 (LYVLGSVALAIAGLFAGLALI). Na(+) contacts are provided by Gly-74 and Thr-77.

It belongs to the fluoride channel Fluc/FEX (TC 1.A.43) family.

It is found in the cell inner membrane. The catalysed reaction is fluoride(in) = fluoride(out). Its activity is regulated as follows. Na(+) is not transported, but it plays an essential structural role and its presence is essential for fluoride channel function. Its function is as follows. Fluoride-specific ion channel. Important for reducing fluoride concentration in the cell, thus reducing its toxicity. The protein is Fluoride-specific ion channel FluC of Rhodopseudomonas palustris (strain BisB5).